Consider the following 512-residue polypeptide: Cytochrome P450 76C1 (512 aa).

Residues 3 to 23 form a helical membrane-spanning segment; it reads IISGQALLLLFCFILSCFLIF. Cys-450 is a heme binding site.

Belongs to the cytochrome P450 family. The cofactor is heme.

The protein resides in the membrane. The polypeptide is Cytochrome P450 76C1 (CYP76C1) (Arabidopsis thaliana (Mouse-ear cress)).